Consider the following 184-residue polypeptide: Oligoribonuclease (184 aa).

Residues 8–171 (LIWIDLEMTG…EDIRESVVEL (164 aa)) form the Exonuclease domain. Y129 is a catalytic residue.

Belongs to the oligoribonuclease family.

The protein localises to the cytoplasm. In terms of biological role, 3'-to-5' exoribonuclease specific for small oligoribonucleotides. The polypeptide is Oligoribonuclease (Buchnera aphidicola subsp. Acyrthosiphon pisum (strain APS) (Acyrthosiphon pisum symbiotic bacterium)).